The primary structure comprises 263 residues: MRKSLLALSLLAATSAPVLAADYSDGDIHKNDYKWMQFNLMGAFNELPGFPDGSNHDYLEMEFGGRSGIFDLYGYVDVFNLASDPGSDKSGKEKIFMKFAPRMSLDAVTGKDLSFGPVQELYVSTLMEWGGASEVNSQKIGLGSDVMVPWLGKIGLNLYGTYDSNKKDWNGYQISTNWFKPFYFFENGSFISYQGYIDWQFGMKDEYSSSSYGGAMFNGIYWHSDRFAVGYGLKGYKNIYGIKEVNGVDSTGFGHYIAVTYKF.

A signal peptide spans 1 to 20 (MRKSLLALSLLAATSAPVLA).

It belongs to the nucleoside-specific channel-forming outer membrane porin (Tsx) (TC 1.B.10) family.

It is found in the cell outer membrane. Functionally, serves as receptor for a broad-host-range vibriophage, KVP40. The sequence is that of Outer membrane protein OmpK from Vibrio parahaemolyticus.